Consider the following 201-residue polypeptide: Probable phosphopantothenoylcysteine decarboxylase (201 aa).

FMN is bound by residues 20-22 (GSV), 45-47 (SKS), 98-101 (SANT), and Ala-132. Residues Asn-134 and 164 to 166 (KLA) contribute to the substrate site. Catalysis depends on Cys-167, which acts as the Proton donor. Met-175 is a binding site for substrate.

The protein belongs to the HFCD (homooligomeric flavin containing Cys decarboxylase) superfamily. In terms of assembly, homotrimer. The cofactor is FMN. In terms of tissue distribution, expressed in roots, shoots, leaves, flowers, developing siliques and seeds.

It carries out the reaction N-[(R)-4-phosphopantothenoyl]-L-cysteine + H(+) = (R)-4'-phosphopantetheine + CO2. The protein operates within cofactor biosynthesis; coenzyme A biosynthesis; CoA from (R)-pantothenate: step 3/5. Functionally, involved in plant growth and salt and osmotic tolerance. Catalyzes the decarboxylation of 4'-phosphopantothenoylcysteine to 4'-phosphopantetheine, a key step in coenzyme A biosynthesis. The enzyme is also able to decarboxylate pantothenoylcysteine to pantothenoylcysteamine. The protein is Probable phosphopantothenoylcysteine decarboxylase (HAL3B) of Arabidopsis thaliana (Mouse-ear cress).